We begin with the raw amino-acid sequence, 1278 residues long: Cytoplasmic FMR1-interacting protein 2 (1278 aa).

The residue at position 1062 (lysine 1062) is an N6-acetyllysine.

The protein belongs to the CYFIP family. As to quaternary structure, component of the WAVE1 complex composed of ABI2, CYFIP2, BRK1, NCKAP1 and WASF1/WAVE1. Interacts with FMR1, FXR1 and FXR2. Interacts with FMR1 isoform 6; the interaction occurs in a RNA-dependent manner. Interacts with RAC1 (activated form) which causes the complex to dissociate, releasing activated WASF1. The complex can also be activated by NCK1. Interacts with SHANK3; the interaction mediates the association of SHANK3 with the WAVE1 complex. Interacts with TMEM108 (via N-terminus); the interaction associates TMEM108 with the WAVE1 complex. Expressed in T-cells. Increased expression is observed in CD4(+) T-lymphocytes from patients with multiple sclerosis (at protein level).

It localises to the cytoplasm. The protein resides in the nucleus. The protein localises to the perinuclear region. Its subcellular location is the synapse. It is found in the synaptosome. In terms of biological role, involved in T-cell adhesion and p53/TP53-dependent induction of apoptosis. Does not bind RNA. As component of the WAVE1 complex, required for BDNF-NTRK2 endocytic trafficking and signaling from early endosomes. The polypeptide is Cytoplasmic FMR1-interacting protein 2 (Homo sapiens (Human)).